We begin with the raw amino-acid sequence, 121 residues long: Ribosome-binding factor A (121 aa).

This sequence belongs to the RbfA family. In terms of assembly, monomer. Binds 30S ribosomal subunits, but not 50S ribosomal subunits or 70S ribosomes.

It localises to the cytoplasm. Functionally, one of several proteins that assist in the late maturation steps of the functional core of the 30S ribosomal subunit. Associates with free 30S ribosomal subunits (but not with 30S subunits that are part of 70S ribosomes or polysomes). Required for efficient processing of 16S rRNA. May interact with the 5'-terminal helix region of 16S rRNA. This chain is Ribosome-binding factor A, found in Paraburkholderia xenovorans (strain LB400).